The following is a 2038-amino-acid chain: Fer-1-like protein 5 (2038 aa).

C2 domains are found at residues 1-100, 145-265, 307-424, 1055-1186, 1225-1345, 1467-1587, and 1705-1853; these read MLRV…MFVR, TQKK…TLLR, QNTR…QGMY, TPED…FTPL, IPCK…SLNY, PKPP…ARCG, and GPPG…KQCS. Ca(2+) is bound by residues Asp1502, Asp1508, Asp1557, Phe1558, Asp1559, Asp1565, Asp1824, Ser1827, and Asp1830. A helical membrane pass occupies residues 1961–1981; the sequence is IICLVVTLVIGFILLNFVYSA.

It belongs to the ferlin family. As to quaternary structure, interacts (via second C2 domain) with EHD1 and EHD2. Requires Ca(2+) as cofactor. Expressed in differentiating myoblasts and myotubes.

The protein resides in the cell membrane. It is found in the membrane. Plays a role in myoblast fusion; probable mediator of endocytic recycling for membrane trafficking events during myotube formation. The polypeptide is Fer-1-like protein 5 (Fer1l5) (Mus musculus (Mouse)).